Reading from the N-terminus, the 697-residue chain is MARKTPIERYRNIGIMAHIDAGKTTTTERILYYTGVSHKLGEVHDGAATMDWMEQEQERGITITSAATTCFWSGMARQFPEHRINIIDTPGHVDFTIEVERSLRVLDGAVAVFCAVGGVEPQSETVWRQANKYKVPRLAFVNKMDRQGADFLRVVGQIRSRLGANPIPIQIPIGAEENFEGVVDLIKMKAIHWDKSSMGMAFEEKEIPGNLQASCDEYREKMIEAAAEASEELMERYLEEGQLPLDDIVKGLRIRTLNGEIVPALCGSAFKNKGVQAMLDAVLSYMPSPVEVPPIKGVQKDETEGERHASDEEPFAALAFKIASDPYVGNLTFFRVYSGVLSSGDTVYNAASGNRERIGRLLQMHSNSREEIKDVMAGDIAAAVGLKNVTTGDTLCDPNHIILLERMEFPEPVISVAIEPKTKGDQERMSIALGKLAREDPSFRVRTDEESGQTIIAGMGELHLDIIVDRMRREFKVEANVGAPQVAYRETIRRSIEQEGKFVRQSGGRGQYGHVWLKLEPQERGKGYEFVNKIVGGTVPKEFIPAVDKGIKEQTENGVIAGYPVVDIKATLYDGSYHDVDSSEMAFKIAGSMAFKEGVQKANPVLLEPIMKVEVVTPEEYMGDVMGDLNRRRGMVQGMEDSLSGKIIRAEVPLAEMFGYATDLRSATQGRANYTMEFSKYNEAPSNIAGAIIKKSQ.

The tr-type G domain occupies 8-290; sequence ERYRNIGIMA…AVLSYMPSPV (283 aa). GTP is bound by residues 17-24, 88-92, and 142-145; these read AHIDAGKT, DTPGH, and NKMD.

The protein belongs to the TRAFAC class translation factor GTPase superfamily. Classic translation factor GTPase family. EF-G/EF-2 subfamily.

It localises to the cytoplasm. Functionally, catalyzes the GTP-dependent ribosomal translocation step during translation elongation. During this step, the ribosome changes from the pre-translocational (PRE) to the post-translocational (POST) state as the newly formed A-site-bound peptidyl-tRNA and P-site-bound deacylated tRNA move to the P and E sites, respectively. Catalyzes the coordinated movement of the two tRNA molecules, the mRNA and conformational changes in the ribosome. This is Elongation factor G from Nitrosococcus oceani (strain ATCC 19707 / BCRC 17464 / JCM 30415 / NCIMB 11848 / C-107).